A 234-amino-acid chain; its full sequence is Thymidylate kinase (234 aa).

Residue 11-18 participates in ATP binding; that stretch reads GLEGSGKT.

The protein belongs to the thymidylate kinase family.

The enzyme catalyses dTMP + ATP = dTDP + ADP. Functionally, phosphorylation of dTMP to form dTDP in both de novo and salvage pathways of dTTP synthesis. This chain is Thymidylate kinase, found in Wigglesworthia glossinidia brevipalpis.